An 85-amino-acid chain; its full sequence is Small ribosomal subunit protein uS17 (85 aa).

The protein belongs to the universal ribosomal protein uS17 family. Part of the 30S ribosomal subunit.

Functionally, one of the primary rRNA binding proteins, it binds specifically to the 5'-end of 16S ribosomal RNA. The polypeptide is Small ribosomal subunit protein uS17 (Haemophilus influenzae (strain 86-028NP)).